We begin with the raw amino-acid sequence, 238 residues long: MNVTLFVTCLVDLFHVNVGKATVELLERLGCTIHFPEAQTCCGQPAYNSGYVKEAKEAMKHMIRTFEHAEYIVTPSGSCATMFKEYPHIFKGDGEWEARAKRVADKTYELTQFIVDVLQVEDVGARLEGKATYHTSCHMTRLLGVKDAPLTLLQHVKGLEVVPLPNAHNCCGFGGTFSVKMGPISEQMVDEKIQCIEQVEADYLIGADCGCLMNIGGRIERKGKPIRVMHIAEVLNHR.

It belongs to the LutA/YkgE family.

Is involved in L-lactate degradation and allows cells to grow with lactate as the sole carbon source. In Anoxybacillus flavithermus (strain DSM 21510 / WK1), this protein is Lactate utilization protein A.